The following is a 339-amino-acid chain: Heat-inducible transcription repressor HrcA (339 aa).

This sequence belongs to the HrcA family.

Functionally, negative regulator of class I heat shock genes (grpE-dnaK-dnaJ and groELS operons). Prevents heat-shock induction of these operons. This chain is Heat-inducible transcription repressor HrcA, found in Leifsonia xyli subsp. xyli (strain CTCB07).